Here is a 193-residue protein sequence, read N- to C-terminus: Thioredoxin M4, chloroplastic (193 aa).

A chloroplast-targeting transit peptide spans 1-82; that stretch reads MASLLDSVTV…RIACEAQDTT (82 aa). The Thioredoxin domain maps to 83–192; that stretch reads AAAVEVPNLS…LEKTIERFLV (110 aa). Active-site nucleophile residues include cysteine 116 and cysteine 119. A disulfide bridge connects residues cysteine 116 and cysteine 119.

Belongs to the thioredoxin family. Plant M-type subfamily.

The protein localises to the plastid. It localises to the chloroplast stroma. Thiol-disulfide oxidoreductase involved in the redox regulation of enzyme of the oxidative pentose phosphate pathway. Under reducing conditions, inhibits the glucose-6-phosphate dehydrogenase. In Arabidopsis thaliana (Mouse-ear cress), this protein is Thioredoxin M4, chloroplastic.